The sequence spans 78 residues: Defensin-like protein 173 (78 aa).

The signal sequence occupies residues 1–23 (MAKAPSPLVFPIIFLIIFALVEP). 4 disulfide bridges follow: Cys-27-Cys-71, Cys-34-Cys-56, Cys-40-Cys-65, and Cys-44-Cys-67.

The protein belongs to the DEFL family.

The protein localises to the secreted. The polypeptide is Defensin-like protein 173 (LCR63) (Arabidopsis thaliana (Mouse-ear cress)).